The primary structure comprises 488 residues: GTPase Der (488 aa).

EngA-type G domains follow at residues 3 to 166 (PVVA…AEAM) and 199 to 372 (IKLA…DSAT). GTP is bound by residues 9 to 16 (GRPNVGKS), 56 to 60 (DTGGI), 118 to 121 (NKVD), 205 to 212 (GKPNVGKS), 252 to 256 (DTAGV), and 317 to 320 (NKWD). The KH-like domain occupies 373-457 (RRVSTSMLTR…PIQLRFQEGD (85 aa)). A disordered region spans residues 469-488 (MSQERRRKRALSHIKDRKTK). Basic residues predominate over residues 473-488 (RRRKRALSHIKDRKTK).

This sequence belongs to the TRAFAC class TrmE-Era-EngA-EngB-Septin-like GTPase superfamily. EngA (Der) GTPase family. Associates with the 50S ribosomal subunit.

In terms of biological role, GTPase that plays an essential role in the late steps of ribosome biogenesis. The polypeptide is GTPase Der (Shewanella sp. (strain W3-18-1)).